The primary structure comprises 242 residues: MNLQMIGTGNAFAKKYFNNNALIEQDGFKLLIDCGITAPLALYELGIGMEELDAVLVTHTHGDHVGGLEEYGFQMKFKHGRRPVLLLPEALVDPLWQNTLSGGMTQEGLEKLEDAFDVRALRVGDVQELAPNLCVELVPTSHIAGKKSYSLILNRDVFYSADMTFEPELLTTLVRDRGIRRILHEVQLEGPGAVHTTLDELLSLPEEMQSIIKLMHYADNKEQFVGRTGKMEFLEQGLVYPI.

The tract at residues 17–216 is beta-lactamase-like; the sequence is FNNNALIEQD…EMQSIIKLMH (200 aa). Residues H59, H61, D63, H64, H142, D162, and H216 each coordinate Zn(2+).

The protein belongs to the anti-Pycsar protein Apyc1 family. Homodimer. Zn(2+) is required as a cofactor.

The catalysed reaction is 3',5'-cyclic CMP + H2O = CMP + H(+). It catalyses the reaction 3',5'-cyclic UMP + H2O = UMP + H(+). Functionally, counteracts the endogenous Pycsar antiviral defense system. Phosphodiesterase that enables metal-dependent hydrolysis of host cyclic nucleotide Pycsar defense signals such as cCMP and cUMP. This chain is Anti-Pycsar protein Apyc1, found in Saccharibacillus brassicae.